The sequence spans 402 residues: Calcium-responsive transactivator (402 aa).

An N-terminal auto-inhibitory domain; necessary for interaction with SMARCA4/BRG1 region spans residues 1-148 (MSVAFASARP…TLPTTSMSLS (148 aa)). The short motif at 50–53 (YQQI) is the SH2-binding element. 2 disordered regions span residues 72 to 171 (QSLL…VPMQ) and 221 to 402 (AMMG…NYQQ). Over residues 85 to 106 (LGPGALSQSGSSQGLHPQGSLS) the composition is skewed to low complexity. Composition is skewed to polar residues over residues 128–149 (NHVS…SLSG) and 161–171 (SGPTSQSVPMQ). Residues 149 to 238 (GSGHGTGPGY…GGSMMGQRPM (90 aa)) form a methionine-rich intra-molecular domain region. Over residues 233 to 251 (MGQRPMAPYRPSQQGSSQQ) the composition is skewed to low complexity. The segment at 252-323 (YLGQEEYYSE…SQYSQQQAGY (72 aa)) is MFD domain. The segment covering 261–277 (EQYSHSQGSAEPMSQQY) has biased composition (polar residues). Residues 296–305 (SYDRSFEDPT) are compositionally biased toward basic and acidic residues. Residues 311-375 (GGNSQYSQQQ…QGQGQQYGSY (65 aa)) are compositionally biased toward low complexity. The necessary for nuclear localization stretch occupies residues 340 to 402 (NQQSYPGQQQ…EQGQYGNYQQ (63 aa)). The short motif at 359 to 362 (SQYS) is the SH2-binding element. Over residues 376-388 (RTSQTGPSAQQQR) the composition is skewed to polar residues. The SH3-binding motif lies at 377 to 385 (TSQTGPSAQ). Over residues 390-402 (YGYEQGQYGNYQQ) the composition is skewed to low complexity. The tract at residues 393–402 (EQGQYGNYQQ) is necessary for interaction with CREBBP and for the recruitment of CREBBP to the nuclear bodies. Residues 397-400 (YGNY) carry the SH2-binding motif.

This sequence belongs to the SS18 family. Homodimer. Dimerization may be necessary for its function in neuronal dendritic development. Interacts (via C-terminus) with CREBBP (via N-terminus), EP300 and SMARCA4/BRG1. Interacts with the nBAF complex. Association with CREBBP facilitates transcription while the association with SMARCA4/BRG1 suppresses CREST-mediated transcription in resting neurons.

It is found in the nucleus. The protein localises to the chromosome. It localises to the centromere. The protein resides in the kinetochore. Transcriptional activator which is required for calcium-dependent dendritic growth and branching in cortical neurons. Recruits CREB-binding protein (CREBBP) to nuclear bodies. Component of the CREST-BRG1 complex, a multiprotein complex that regulates promoter activation by orchestrating a calcium-dependent release of a repressor complex and a recruitment of an activator complex. In resting neurons, transcription of the c-FOS promoter is inhibited by BRG1-dependent recruitment of a phospho-RB1-HDAC1 repressor complex. Upon calcium influx, RB1 is dephosphorylated by calcineurin, which leads to release of the repressor complex. At the same time, there is increased recruitment of CREBBP to the promoter by a CREST-dependent mechanism, which leads to transcriptional activation. The CREST-BRG1 complex also binds to the NR2B promoter, and activity-dependent induction of NR2B expression involves a release of HDAC1 and recruitment of CREBBP. This chain is Calcium-responsive transactivator (Ss18l1), found in Mus musculus (Mouse).